The chain runs to 33 residues: MSDIN-like toxin proprotein 6 (33 aa).

A propeptide spanning residues 1 to 10 is cleaved from the precursor; sequence MSDINATRLP. A cross-link (cyclopeptide (Leu-Pro)) is located at residues 11–20; sequence LILLAALGIP. Positions 21–33 are excised as a propeptide; sequence SDDADSTLTRGER.

The protein belongs to the MSDIN fungal toxin family. Processed by the macrocyclase-peptidase enzyme POPB to yield a toxic cyclic decapeptide. POPB first removes 10 residues from the N-terminus. Conformational trapping of the remaining peptide forces the enzyme to release this intermediate rather than proceed to macrocyclization. The enzyme rebinds the remaining peptide in a different conformation and catalyzes macrocyclization of the N-terminal 10 residues.

Probable toxin that belongs to the MSDIN-like toxin family responsible for a large number of food poisoning cases and deaths. In Amanita phalloides (Death cap), this protein is MSDIN-like toxin proprotein 6.